A 147-amino-acid chain; its full sequence is Large ribosomal subunit protein uL15 (147 aa).

Residues 1–57 form a disordered region; sequence MRLEDLRPTPGSMKKRKRVGRGPGSGHGKTSGRGHKGQKARGTGKVHPWFEGGQTPL. A compositionally biased stretch (basic residues) spans 30–44; the sequence is TSGRGHKGQKARGTG.

This sequence belongs to the universal ribosomal protein uL15 family. As to quaternary structure, part of the 50S ribosomal subunit.

Functionally, binds to the 23S rRNA. This Thermotoga neapolitana (strain ATCC 49049 / DSM 4359 / NBRC 107923 / NS-E) protein is Large ribosomal subunit protein uL15.